The following is a 444-amino-acid chain: Putative methylesterase 15, chloroplastic (444 aa).

Polar residues predominate over residues 1 to 27 (MGNSLRCISQEQDPNQKKPSSVVNGNS). Disordered stretches follow at residues 1-36 (MGNS…RRLS) and 48-91 (PSLS…DSLI). Residues 1 to 58 (MGNSLRCISQEQDPNQKKPSSVVNGNSSEKHVRRLSLIPSFRRRTLLPSLSCSGSSTS) constitute a chloroplast transit peptide. Residues 53–63 (SGSSTSSTSKK) are compositionally biased toward low complexity. Residues 64 to 80 (GGIKTKKKIRERHHQEQ) show a composition bias toward basic residues. A compositionally biased stretch (basic and acidic residues) spans 81–90 (HHHDHEKDSL). The AB hydrolase-1 domain occupies 188 to 312 (FVLVHGGGFG…QPDSNYDLME (125 aa)). The Acyl-ester intermediate role is filled by aspartate 262. Active-site charge relay system residues include aspartate 390 and histidine 418.

This sequence belongs to the AB hydrolase superfamily. Methylesterase family.

The protein resides in the plastid. Its subcellular location is the chloroplast. Functionally, putative methylesterase. This Arabidopsis thaliana (Mouse-ear cress) protein is Putative methylesterase 15, chloroplastic.